The sequence spans 202 residues: Imidazoleglycerol-phosphate dehydratase (202 aa).

Belongs to the imidazoleglycerol-phosphate dehydratase family.

The protein localises to the cytoplasm. It catalyses the reaction D-erythro-1-(imidazol-4-yl)glycerol 3-phosphate = 3-(imidazol-4-yl)-2-oxopropyl phosphate + H2O. The protein operates within amino-acid biosynthesis; L-histidine biosynthesis; L-histidine from 5-phospho-alpha-D-ribose 1-diphosphate: step 6/9. The sequence is that of Imidazoleglycerol-phosphate dehydratase from Rhizobium meliloti (strain 1021) (Ensifer meliloti).